A 348-amino-acid polypeptide reads, in one-letter code: S-adenosylmethionine-dependent nucleotide dehydratase RSAD2 (348 aa).

In terms of domain architecture, Radical SAM core spans 56-276 (SATPSSVNYH…LERHSSISCL (221 aa)). [4Fe-4S] cluster-binding residues include Cys-70, Cys-74, and Cys-77.

It belongs to the radical SAM superfamily. RSAD2 family. It depends on [4Fe-4S] cluster as a cofactor. As to expression, expressed at low levels in spleen and head kidney.

Its subcellular location is the endoplasmic reticulum membrane. Interferon-inducible iron-sulfur (4FE-4S) cluster-binding antiviral protein which plays a major role in the cell antiviral state induced by type I and type II interferon. The chain is S-adenosylmethionine-dependent nucleotide dehydratase RSAD2 from Oncorhynchus mykiss (Rainbow trout).